A 296-amino-acid polypeptide reads, in one-letter code: GTPase Era (296 aa).

Residues 7–174 (RTGFVAVVGR…LDEIAARLPE (168 aa)) enclose the Era-type G domain. Positions 15–22 (GRPNVGKS) are G1. GTP is bound at residue 15–22 (GRPNVGKS). The segment at 41-45 (QTTRH) is G2. The segment at 62-65 (DTPG) is G3. Residues 62-66 (DTPGF) and 123-126 (SKID) each bind GTP. The interval 123–126 (SKID) is G4. The interval 153–155 (VSA) is G5. The KH type-2 domain maps to 205-281 (VGDELPYGCT…HLEVYIKVRK (77 aa)).

Belongs to the TRAFAC class TrmE-Era-EngA-EngB-Septin-like GTPase superfamily. Era GTPase family. In terms of assembly, monomer.

The protein resides in the cytoplasm. It is found in the cell inner membrane. An essential GTPase that binds both GDP and GTP, with rapid nucleotide exchange. Plays a role in 16S rRNA processing and 30S ribosomal subunit biogenesis and possibly also in cell cycle regulation and energy metabolism. The chain is GTPase Era from Bordetella petrii (strain ATCC BAA-461 / DSM 12804 / CCUG 43448).